The sequence spans 1703 residues: Protein TIC 214 (1703 aa).

A run of 6 helical transmembrane segments spans residues Y39–L61, G67–C87, L90–Y110, L138–L158, F174–I194, and F220–I240. Disordered stretches follow at residues G615–E643 and T1431–K1494. A coiled-coil region spans residues K618 to F660. A compositionally biased stretch (basic and acidic residues) spans G619–E643.

This sequence belongs to the TIC214 family. Part of the Tic complex.

The protein localises to the plastid. It is found in the chloroplast inner membrane. Its function is as follows. Involved in protein precursor import into chloroplasts. May be part of an intermediate translocation complex acting as a protein-conducting channel at the inner envelope. The chain is Protein TIC 214 from Psilotum nudum (Whisk fern).